A 168-amino-acid polypeptide reads, in one-letter code: DAZ-associated protein 2 (168 aa).

Residues 1–13 show a composition bias toward low complexity; that stretch reads MNSKGQYPTQPTY. Residues 1-25 are disordered; it reads MNSKGQYPTQPTYPVQPPGNPVYPQ. Positions 39-42 match the PPAY motif; sequence PPAY. Serine 77 is modified (phosphoserine).

As to quaternary structure, interacts with SOX6. Interacts with DAZ1 and DAZL. Interacts with IL17RB. May interact with FAM168B. Interacts with INCA1. Interacts with EIF4G1 and EIF4G2. Interacts (via PPAY motif) with NEDD4 (via WW domains). Interacts with transcription factor TCF4; the interaction results in localization of DAZAP2 to the nucleus. Interacts with transcription factors TCF7 and TCF7L1. Interacts with transcription factor LEF1. Interacts with serine/threonine-protein kinase HIPK2; the interaction results in phosphorylation of DAZAP2 which causes localization of DAZAP2 to the nucleus, reduces interaction of DAZAP2 with HIPK2 and prevents DAZAP2-dependent degradation of HIPK2. Interacts with ubiquitin ligase SIAH1; the interaction is decreased following phosphorylation of DAZAP2 by HIPK2. Interacts with TP53; the interaction is triggered by DNA damage. Ubiquitinated by SMURF2, leading to proteasomal degradation. Ubiquitinated by NEDD4, leading to proteasomal degradation. In terms of processing, following DNA damage, phosphorylated by HIPK2 which promotes DAZAP2 localization to the nucleus, reduces interaction of DAZAP2 with HIPK2 and SIAH1, and prevents DAZAP2-dependent ubiquitination of HIPK2 by E3 ubiquitin-protein ligase SIAH1 and subsequent HIPK2 proteasomal degradation.

The protein resides in the cytoplasm. It localises to the nucleus. Its subcellular location is the nucleus speckle. The protein localises to the nuclear body. It is found in the stress granule. In terms of biological role, in unstressed cells, promotes SIAH1-mediated polyubiquitination and degradation of the serine/threonine-protein kinase HIPK2, probably by acting as a loading factor that potentiates complex formation between HIPK2 and ubiquitin ligase SIAH1. In response to DNA damage, localizes to the nucleus following phosphorylation by HIPK2 and modulates the expression of a subset of TP53/p53 target genes by binding to TP53 at target gene promoters. This limits the expression of a number of cell death-mediating TP53 target genes, reducing DNA damage-induced cell death. Enhances the binding of transcription factor TCF7L2/TCF4, a Wnt signaling pathway effector, to the promoters of target genes. Plays a role in stress granule formation. The protein is DAZ-associated protein 2 of Bos taurus (Bovine).